Reading from the N-terminus, the 581-residue chain is Proline--tRNA ligase (581 aa).

It belongs to the class-II aminoacyl-tRNA synthetase family. ProS type 1 subfamily. Homodimer.

It is found in the cytoplasm. It catalyses the reaction tRNA(Pro) + L-proline + ATP = L-prolyl-tRNA(Pro) + AMP + diphosphate. Catalyzes the attachment of proline to tRNA(Pro) in a two-step reaction: proline is first activated by ATP to form Pro-AMP and then transferred to the acceptor end of tRNA(Pro). As ProRS can inadvertently accommodate and process non-cognate amino acids such as alanine and cysteine, to avoid such errors it has two additional distinct editing activities against alanine. One activity is designated as 'pretransfer' editing and involves the tRNA(Pro)-independent hydrolysis of activated Ala-AMP. The other activity is designated 'posttransfer' editing and involves deacylation of mischarged Ala-tRNA(Pro). The misacylated Cys-tRNA(Pro) is not edited by ProRS. This Variovorax paradoxus (strain S110) protein is Proline--tRNA ligase.